A 1149-amino-acid chain; its full sequence is Golgi apparatus protein 1 homolog (1149 aa).

Positions 1–19 are cleaved as a signal peptide; that stretch reads MWRFPLILASVCWLTTAQQ. Topologically, residues 20 to 1115 are extracellular; it reads QNVANDPDKK…NLVMEHPERN (1096 aa). Cys-rich GLG1 repeat units lie at residues 24–69, 71–135, 139–207, 216–276, 277–344, 349–411, 415–475, 477–549, 551–610, 613–676, 677–736, 743–803, 809–867, 868–938, 945–1009, and 1010–1070; these read NDPD…FSET, TLSE…KNVT, KCHA…VKNA, ILGD…NDKF, MDPE…NQPE, QPSK…ESRN, KLGA…NVDS, DMVP…YDEQ, PLSV…ETDN, RKHP…DAKE, MNNK…FEHK, DLTD…IECL, HLGP…IVRL, LQRE…RQSI, DFSP…NKGL, and IRDK…DKQE. The N-linked (GlcNAc...) asparagine glycan is linked to asparagine 133. Asparagine 411 is a glycosylation site (N-linked (GlcNAc...) asparagine). A helical membrane pass occupies residues 1116–1136; it reads SILGYLAGFIVFILLIGCCCG. At 1137–1149 the chain is on the cytoplasmic side; the sequence is RVSKKQYIEMKNR.

The protein localises to the membrane. This is Golgi apparatus protein 1 homolog from Caenorhabditis elegans.